A 308-amino-acid chain; its full sequence is Putative lipid kinase SH2167 (308 aa).

In terms of domain architecture, DAGKc spans 1–139 (MGQKFNHGVL…YDVMKVNGTY (139 aa)). Residues S44, 74-80 (GDGTVNE), and T101 each bind ATP. Mg(2+)-binding residues include S220, D223, and K225. The Proton acceptor role is filled by E281.

It belongs to the diacylglycerol/lipid kinase family. Mg(2+) serves as cofactor.

In terms of biological role, may catalyze the ATP-dependent phosphorylation of lipids other than diacylglycerol (DAG). This is Putative lipid kinase SH2167 from Staphylococcus haemolyticus (strain JCSC1435).